A 960-amino-acid polypeptide reads, in one-letter code: MMRFHKACHRFSLSPLCHLSPPSPSPASSLLLLPKLSGFSTLSTRRCVRVRRFSENPLTTVMASRSASRLRSLASACSGGAEDGGGTSNGSLSASATATEDDELAIGTGYRLPPPEIRDIVDAPPVPALSFSPHRDKILFLKRRALPPLADLARPEEKLAGVRIDGYCNTRSRMSFYTGLGIHQLLPDGTLSPEKEITGIPDGGKINFVTWSNDGKHLAFSIRVDENGNSSKPVVWVADVETGVARPLFNSQDIFLNAIFESFVWIDNSTLLVSTIPSSRGEPPKKPLVPSGPKTLSNETKTVVQVRTFQDLLKDEYDADLFDYYASSQLVLASLDGTVKEVGVPAVYTSLDPSTDHKYLLVSSLHRPYSFIVPCGRFPKKVEVWTTDGRFVRQLCDLPLAEDIPIASNSVRKGMRSINWRADKPSTLWAETQDGGDAKMEVSPRDIVYMQSAEPLAGEEPEVLHKLDLRYGGISWCDDTLALVYESWYKTRRTRTWVISPGSNDVSPRILFDRSSEDVYSDPGSTMLRRTDAGTYVIAKIKKENDEGTYVLLNGSGATPQGNVPFLDLFDINTGNKERIWESDKEKYFETVVALMSDQKEGDLKMEELKILTSKESKTENTQYSLQLWPDRKVQQITNFPHPYPQLASLQKEMIRYQRKDGVQLTATLYLPPGYDPSKDGPLPCLFWSYPGEFKSKDAAGQVRGSPNEFAGIGSTSALLWLARRFAILSGPTIPIIGEGDEEANDRYVEQLVASAEAAVEEVVRRGVADRSKIAVGGHSYGAFMTANLLAHAPHLFACGIARSGAYNRTLTPFGFQNEDRTLWEATNVYVEMSPFMSANKIKKPILLIHGEEDNNPGTLTMQSDRFFNALKGHGALCRLVVLPHESHGYSARESIMHVLWETDRWLQKYCVPNTSDADTSPDQSKEGSDSADKVSTGTGGGNPEFGEHEVHSKLRRSLL.

The N-terminal 62 residues, 1 to 62 (MMRFHKACHR…FSENPLTTVM (62 aa)), are a transit peptide targeting the chloroplast. Residues 78–98 (SGGAEDGGGTSNGSLSASATA) form a disordered region. A compositionally biased stretch (polar residues) spans 89–98 (NGSLSASATA). Active-site charge relay system residues include serine 780, aspartate 854, and histidine 888. Positions 915-960 (TSDADTSPDQSKEGSDSADKVSTGTGGGNPEFGEHEVHSKLRRSLL) are disordered. Over residues 924–933 (QSKEGSDSAD) the composition is skewed to basic and acidic residues.

It belongs to the peptidase S9D family.

It is found in the plastid. Its subcellular location is the chloroplast stroma. In terms of biological role, serine-type protease active in vitro against the LHCII N-terminal. Cleaves its substrate on the carboxy-side of Glu residues. This is Probable glutamyl endopeptidase, chloroplastic (GEP) from Arabidopsis thaliana (Mouse-ear cress).